Here is a 246-residue protein sequence, read N- to C-terminus: ATP synthase subunit a (246 aa).

A propeptide spans 1-3 (MFY) (removed in mature form). Helical transmembrane passes span 20 to 40 (ILTL…SIIF), 56 to 76 (WGVA…SQIG), 82 to 102 (FFPL…ISMI), 112 to 132 (LVAI…LGLY), 138 to 158 (FFAL…LVLI), 176 to 196 (ANIL…VNLM), and 203 to 223 (FIGG…EVGI).

It belongs to the ATPase A chain family. In terms of assembly, F-type ATPases have 2 components, CF(1) - the catalytic core - and CF(0) - the membrane proton channel. CF(1) has five subunits: alpha(3), beta(3), gamma(1), delta(1), epsilon(1). CF(0) has three main subunits: a, b and c.

The protein resides in the mitochondrion inner membrane. Mitochondrial membrane ATP synthase (F(1)F(0) ATP synthase or Complex V) produces ATP from ADP in the presence of a proton gradient across the membrane which is generated by electron transport complexes of the respiratory chain. F-type ATPases consist of two structural domains, F(1) - containing the extramembraneous catalytic core and F(0) - containing the membrane proton channel, linked together by a central stalk and a peripheral stalk. During catalysis, ATP synthesis in the catalytic domain of F(1) is coupled via a rotary mechanism of the central stalk subunits to proton translocation. Key component of the proton channel; it may play a direct role in the translocation of protons across the membrane. The chain is ATP synthase subunit a (ATP6) from Candida albicans (strain SC5314 / ATCC MYA-2876) (Yeast).